The primary structure comprises 153 residues: Putative pre-16S rRNA nuclease (153 aa).

The protein belongs to the YqgF nuclease family.

It is found in the cytoplasm. Could be a nuclease involved in processing of the 5'-end of pre-16S rRNA. The sequence is that of Putative pre-16S rRNA nuclease from Prochlorococcus marinus (strain SARG / CCMP1375 / SS120).